The sequence spans 1009 residues: DENN domain-containing protein 1A (1009 aa).

The uDENN domain maps to 13-145 (FEVYVEVAYP…HKLPIPDPGV (133 aa)). In terms of domain architecture, cDENN spans 162–298 (ELPSIPENRN…VISSLKNRLK (137 aa)). Residues 300-378 (VSTTTGDGVA…DGRLDLLNSG (79 aa)) form the dDENN domain. The short motif at 381 to 385 (FSDVF) is the FXDXF motif element. Positions 453–564 (DIAENGCAPT…TGPVPAPPDR (112 aa)) are disordered. S473 is subject to Phosphoserine. The span at 477–489 (EAKDPKLREDRRP) shows a compositional bias: basic and acidic residues. Residues 500–509 (PRPHVVKRPK) show a composition bias toward basic residues. The residue at position 519 (T519) is a Phosphothreonine. Residues S520, S523, S536, S538, and S546 each carry the phosphoserine modification. The Clathrin box motif lies at 569–578 (DLLEDVFSNL). S592 is subject to Phosphoserine. The tract at residues 648–714 (IPSKPPAASP…RKTPELGIVP (67 aa)) is disordered. S749 carries the post-translational modification Phosphoserine. Disordered stretches follow at residues 796–831 (STLP…QPPL) and 928–1009 (RSSA…ETFE). 2 stretches are compositionally biased toward pro residues: residues 820-831 (AGTPTPFPQPPL) and 945-957 (GDPP…PPQG). The span at 972–983 (DPFEDLLQKTKQ) shows a compositional bias: basic and acidic residues. Low complexity predominate over residues 986–997 (SPSPALAPAPDS). Basic and acidic residues predominate over residues 999 to 1009 (EQLRKQWETFE).

In terms of assembly, interacts with RAB35. Interacts with clathrin and with the adapter protein complex 2, AP-2. Interacts with ITSN1 and SH3GL2. Interacts (when phosphorylated) with YWHAE. In terms of processing, phosphorylated on serine and/or threonine in an Akt-dependent manner. Phosphorylation probably regulates the guanine nucleotide exchange factor (GEF) activity, possibly by disrupting an intramolecular interaction between the DENN domain and the C-terminus of the protein, thereby relieving the autoinhibition.

The protein resides in the cytoplasmic vesicle. It is found in the clathrin-coated vesicle membrane. Its subcellular location is the presynaptic cell membrane. The guanine nucleotide exchange factor (GEF) activity is autoinhibited. Autoinhibition may be the result of intramolecular interaction between the DENN domain and the C-terminus, which is disrupted upon phosphorylation. Activation is regulated by Akt activation. Its function is as follows. Guanine nucleotide exchange factor (GEF) regulating clathrin-mediated endocytosis through RAB35 activation. Promotes the exchange of GDP to GTP, converting inactive GDP-bound RAB35 into its active GTP-bound form. Regulates clathrin-mediated endocytosis of synaptic vesicles and mediates exit from early endosomes. Binds phosphatidylinositol-phosphates (PtdInsPs), with some preference for PtdIns(3)P. This is DENN domain-containing protein 1A from Homo sapiens (Human).